The primary structure comprises 57 residues: Large ribosomal subunit protein bL32 (57 aa).

Basic residues predominate over residues 1–19; that stretch reads MATPKRRMSRANTRSRRSQ. The segment at 1 to 21 is disordered; it reads MATPKRRMSRANTRSRRSQWK.

It belongs to the bacterial ribosomal protein bL32 family.

The polypeptide is Large ribosomal subunit protein bL32 (Mycobacterium ulcerans (strain Agy99)).